Reading from the N-terminus, the 183-residue chain is NADH dehydrogenase [ubiquinone] iron-sulfur protein 4, mitochondrial (183 aa).

A mitochondrion-targeting transit peptide spans 1-28 (MSALRQVMCRSTASLQLYQANRAAAARW). S181 carries the phosphoserine modification.

Belongs to the complex I NDUFS4 subunit family.

The protein localises to the mitochondrion inner membrane. Its function is as follows. Accessory subunit of the mitochondrial membrane respiratory chain NADH dehydrogenase (Complex I), that is believed not to be involved in catalysis. Complex I functions in the transfer of electrons from NADH to the respiratory chain. The immediate electron acceptor for the enzyme is believed to be ubiquinone. This Drosophila melanogaster (Fruit fly) protein is NADH dehydrogenase [ubiquinone] iron-sulfur protein 4, mitochondrial.